The following is a 458-amino-acid chain: Major capsid protein (458 aa).

Residues 21 to 110 (LEGLTAAQKA…EIKSLLTARE (90 aa)) are a coiled coil.

This sequence belongs to the HK97 phage major capsid protein family. As to quaternary structure, interacts with the decoration protein; each hexon binds a single copy of the decoration protein. Interacts with the portal protein. The scaffolding domain delta is cleaved by the prohead protease and lost after assembly. The major capsid protein precursors together with both the portal complex and the maturation protease form prohead I. All copies of the major capsid protein precursor are cleaved to the mature major capsid protein by release of the scaffolding domain delta, yielding the metastable prohead II.

Its subcellular location is the virion. Major capsid protein that self-associates to form 120 hexamers and 11 pentamers, building the T=13 icosahedral capsid which about 860 Angstroms in diameter. Responsible for its self-assembly into a procapsid. The phage does not need to encode a separate scaffolfing protein because its capsid protein contains the delta domain that carries that function. The capsid gains its final stability through the reorganization of the subunits that takes place upon expansion. DNA encapsidation through the portal triggers capsid expansion and the binding of the decoration protein to the capsid exterior. Might play a role in counteracting the host Pycsar defense system that is mediated by pyrimidine cyclases and leads to abortive infection. The polypeptide is Major capsid protein (Escherichia coli (Enterobacteria phage T5)).